A 491-amino-acid polypeptide reads, in one-letter code: Protein OrfX3 (491 aa).

The protein belongs to the TULIP P47 family. As to quaternary structure, heterodimer of OrfX1 and OrfX3; crystallizes as a dimer of heterodimers.

In terms of biological role, expression of the ptox operon (ntnh-orfX1-orfX2-orfX3-pmp1) in B.thuringiensis kills Anopheles but not Aedes mosquito 3rd instar larvae. The ntnh-pmp1 construct is about half as toxic. This is Protein OrfX3 from Paraclostridium bifermentans (Clostridium bifermentans).